We begin with the raw amino-acid sequence, 105 residues long: Defensin-like protein (105 aa).

Residues 1-25 (MARSLCFMAFAILAMMLFVAYEVQA) form the signal peptide. Intrachain disulfides connect C28–C72, C39–C59, C45–C66, and C49–C68.

It belongs to the DEFL family. As to expression, flower. Found in petals, stamen and pistils, but not in sepals. In particular, accumulation in a configuration surrounding the inner reproductive whorls.

The protein resides in the secreted. Its subcellular location is the cell wall. The protein localises to the vacuole. Functionally, involved in floral organogenesis. May play a protective role in flowers by protecting the reproductive organs from potential pathogen attack. The chain is Defensin-like protein (FST) from Nicotiana tabacum (Common tobacco).